A 475-amino-acid chain; its full sequence is Protein transport protein Sec61 subunit alpha (475 aa).

The next 10 membrane-spanning stretches (helical) occupy residues 33-53 (LWTA…LFGI), 76-96 (LMEL…LLAG), 118-138 (LFGM…GMYG), 145-165 (AGIC…VLLL), 173-193 (YGLG…TIVW), 241-261 (NLMN…FQGF), 289-309 (IPII…QMLA), 354-374 (FLDP…CAFF), 420-440 (AAFG…IGAI), and 441-461 (GSGT…EIFV).

The protein belongs to the SecY/SEC61-alpha family. As to quaternary structure, the SEC61 channel-forming translocon complex consists of channel-forming core components SEC61A1, SEC61B and SEC61G and different auxiliary components such as SEC62 and SEC63. The SEC61 channel associates with the multi-pass translocon (MPT) complex. As to expression, expressed predominantly in epidermal cells of the embryo.

It localises to the endoplasmic reticulum membrane. Functionally, component of SEC61 channel-forming translocon complex that mediates transport of signal peptide-containing precursor polypeptides across the endoplasmic reticulum (ER). Forms a ribosome receptor and a gated pore in the ER membrane, both functions required for cotranslational translocation of nascent polypeptides. May cooperate with auxiliary protein SEC62, SEC63 and HSPA5/BiP to enable post-translational transport of small presecretory proteins. The SEC61 channel is also involved in ER membrane insertion of transmembrane proteins: it mediates membrane insertion of the first few transmembrane segments of proteins, while insertion of subsequent transmembrane regions of multi-pass membrane proteins is mediated by the multi-pass translocon (MPT) complex. This chain is Protein transport protein Sec61 subunit alpha, found in Halocynthia roretzi (Sea squirt).